A 337-amino-acid chain; its full sequence is Ferredoxin--NADP reductase (337 aa).

Positions 35, 43, 48, 88, 122, 289, and 330 each coordinate FAD.

The protein belongs to the ferredoxin--NADP reductase type 2 family. Homodimer. FAD serves as cofactor.

It carries out the reaction 2 reduced [2Fe-2S]-[ferredoxin] + NADP(+) + H(+) = 2 oxidized [2Fe-2S]-[ferredoxin] + NADPH. In Ehrlichia ruminantium (strain Welgevonden), this protein is Ferredoxin--NADP reductase.